We begin with the raw amino-acid sequence, 588 residues long: Intracellular maltogenic amylase (588 aa).

Residues N149, S155, G174, and D176 each coordinate Ca(2+). Substrate contacts are provided by H249 and R325. D327 acts as the Nucleophile in catalysis. E356 serves as the catalytic Proton donor. Residues 422–423 (HD), D467, and R471 each bind substrate.

It belongs to the glycosyl hydrolase 13 family. BbmA subfamily. As to quaternary structure, monomer or homodimer; in equilibrium. Ca(2+) is required as a cofactor.

Its subcellular location is the cytoplasm. Functionally, hydrolyzes beta-cyclodextrin to maltose and glucose, soluble starch to maltose and glucose, and pullulan to panose with trace amounts of maltose and glucose. It is also able to hydrolyze acarbose. Can also exhibit a transglycosylation activity transferring glucose or maltose to another moiety of sugars by forming alpha-(1,6)- and alpha-(1,3)-glycosidic linkages upon the hydrolysis of substrate at concentrations of 5% or higher. The sequence is that of Intracellular maltogenic amylase (bbmA) from Bacillus subtilis (strain 168).